The sequence spans 186 residues: Interferon lambda-3 (186 aa).

A signal peptide spans 1–21 (MVCYGVTIILVGTLGSLLVGA). Cystine bridges form between C31-C128, C65-C160, and C178-C185.

The protein belongs to the lambda interferon family.

The protein localises to the secreted. Cytokine which plays a critical role in the antiviral host defense, predominantly in the epithelial tissues. Acts as a ligand for the heterodimeric class II cytokine receptor composed of IL10RB and IFNLR1, and receptor engagement leads to the activation of the JAK/STAT signaling pathway resulting in the expression of IFN-stimulated genes (ISG), which mediate the antiviral state. Has a restricted receptor distribution and therefore restricted targets: is primarily active in epithelial cells and this cell type-selective action is because of the epithelial cell-specific expression of its receptor IFNLR1. Exhibits antiviral activity against the H5N1 influenza A virus. Induces the expression of the antiviral MX protein in epithelial-rich tissues, such as intestine, trachea and lung. The polypeptide is Interferon lambda-3 (IFNL3) (Gallus gallus (Chicken)).